A 375-amino-acid chain; its full sequence is Queuine tRNA-ribosyltransferase (375 aa).

Aspartate 89 (proton acceptor) is an active-site residue. Residues 89–93, aspartate 143, glutamine 187, and glycine 214 each bind substrate; that span reads DSGGF. The interval 245-251 is RNA binding; that stretch reads GVGKPED. The Nucleophile role is filled by aspartate 264. The segment at 269 to 273 is RNA binding; important for wobble base 34 recognition; that stretch reads TRNAR. Zn(2+)-binding residues include cysteine 302, cysteine 304, cysteine 307, and histidine 333.

Belongs to the queuine tRNA-ribosyltransferase family. As to quaternary structure, homodimer. Within each dimer, one monomer is responsible for RNA recognition and catalysis, while the other monomer binds to the replacement base PreQ1. Zn(2+) is required as a cofactor.

The catalysed reaction is 7-aminomethyl-7-carbaguanine + guanosine(34) in tRNA = 7-aminomethyl-7-carbaguanosine(34) in tRNA + guanine. Its pathway is tRNA modification; tRNA-queuosine biosynthesis. Catalyzes the base-exchange of a guanine (G) residue with the queuine precursor 7-aminomethyl-7-deazaguanine (PreQ1) at position 34 (anticodon wobble position) in tRNAs with GU(N) anticodons (tRNA-Asp, -Asn, -His and -Tyr). Catalysis occurs through a double-displacement mechanism. The nucleophile active site attacks the C1' of nucleotide 34 to detach the guanine base from the RNA, forming a covalent enzyme-RNA intermediate. The proton acceptor active site deprotonates the incoming PreQ1, allowing a nucleophilic attack on the C1' of the ribose to form the product. After dissociation, two additional enzymatic reactions on the tRNA convert PreQ1 to queuine (Q), resulting in the hypermodified nucleoside queuosine (7-(((4,5-cis-dihydroxy-2-cyclopenten-1-yl)amino)methyl)-7-deazaguanosine). In Enterobacter sp. (strain 638), this protein is Queuine tRNA-ribosyltransferase.